The chain runs to 356 residues: Heme A synthase (356 aa).

5 consecutive transmembrane segments (helical) span residues 23–43, 105–125, 141–161, 173–193, and 212–232; these read IAIW…VGGV, FHRL…LYFL, IFLL…SGLV, AHLG…LDLL, and STML…VAGI. Residue His274 participates in heme binding. Helical transmembrane passes span 276–296, 307–327, and 329–349; these read LIAW…RAVP, LLLI…LLVV, and LTLA…ALWV. Residue His335 participates in heme binding.

This sequence belongs to the COX15/CtaA family. Type 2 subfamily. As to quaternary structure, interacts with CtaB. Heme b is required as a cofactor.

The protein localises to the cell membrane. The catalysed reaction is Fe(II)-heme o + 2 A + H2O = Fe(II)-heme a + 2 AH2. Its pathway is porphyrin-containing compound metabolism; heme A biosynthesis; heme A from heme O: step 1/1. Catalyzes the conversion of heme O to heme A by two successive hydroxylations of the methyl group at C8. The first hydroxylation forms heme I, the second hydroxylation results in an unstable dihydroxymethyl group, which spontaneously dehydrates, resulting in the formyl group of heme A. In Nitrosospira multiformis (strain ATCC 25196 / NCIMB 11849 / C 71), this protein is Heme A synthase.